The sequence spans 112 residues: MLDEKSSNTTSVVVLCTAPDEATAQDLAAKVLAEKLAACATLIPGATSLYYWEGKLEQEYEVQMILKTTVSHQQALLECLKSHHPYQTPELLVLPVTHGDTDYLSWLNASLR.

The Cu cation site is built by cysteine 16, histidine 83, and histidine 84.

It belongs to the CutA family. As to quaternary structure, homotrimer. The cofactor is Cu cation.

It localises to the cytoplasm. Functionally, involved in resistance toward heavy metals. The chain is Divalent-cation tolerance protein CutA from Shigella flexneri.